The sequence spans 1838 residues: MSAKTEADNTTAANSGGGGVGSGTSSGGGASANGTATPARRLRTRNSTGNGTNSGSESVKKSNANDEPSTPVTPAGATGSHTHAPPGISPAVMERPMPSVPMNHASSSVSASKKYHNSCPHPTPTPAPTGHKKSVHTQPHSSNKFDQGKNEEFHFDTPPECPVFRPTTEEFKNPLAYISKIRSIAEKCGIAKILPPATWSPPFAVDVDKLRFVPRVQRLNELEAKTRVKLNFLDQIAKFWELQGSSLKIPMVERKALDLYTLHRIVQEEGGMEQTTKDRKWAKVANRMQYPSSKSVGATLKAHYERILHPFEVYTSGKVLGPTPTSSGSGSTPVKLEDGGGTDYKAHEIPTRQQIAPPNETNTRRSKRFGNSNASCGLSGVTPTTKPSAGVFVKTETKEEFKRDLLSSFNAVNSGGSPLATGTTANTRGASQKKGGEPPALIVDPLMKYICHICNRGDVEESMLLCDGCDDSYHTFCLLPPLTSIPKGEWLCPRCVVEEVSKPQEAFGFEQAEREYTLQQFGQMADQFKQEYFRKPVHLVPTEMVEREFWRIVSSIDEDVTVEYGADLHTMDHGSGFPTKSSLYLLPGDQEYAESSWNLNNLPLLEDSILGHINADISGMNAPWMYVGMCFAAFCWHNEDHWSYSINYLHWGEPKTWYGVPGSCAEQFEETMKQAAPELFSSQPDLLHQLVTIMNPNILMNNRVPVFRTDQHAGEFVITFPRAYHAGFNQGYNFAEAVNFAPADWLKMGRECVNHYSMLRRFCVFSHDELVCKMALEPAKLTFGIATACYIDMAEMVDTEKKLRKSLLEWGVTRAERRAFELVNDDERHCQECNTTCFLSAVACECNDKLIVCLRHYTVLCGCAPEKHTLIYRYTLDEMPLMLQKLKVKAHSFERWLSRCRDIVDAHTPTSVTLQELQELCKEAETKKFPSSLLIDRLNAAAVEAEKCVTVIQQLGINKVRTRSDHNQEAAQYKLTMEELELFVQEIDNLCCIIDEGASVRELLVLGKQFVERSESQLQLSLESLEESELETLINEGSSLRIELQQLDLLQKRLKQCKWYKRSQGLRETSSKLTYQDVKNLLHIAAADLDPTDPYVDKEMRKLQQIGADIEAWESQAAKYFRRLTQQHELGEIEQFLKSASDINGQVPSHGLLKDALRKAREWLRAVEQLQQNNHVTYCHTLEAMIERGLNIPIQLEELSRMQGHLNSAHQWKDNTACAFLKKGTFYTLLEVLMPRSDAINIDSDLKPRFQDDFLKEKNPAEIVASFKHAEEQELLDMRELRRQNMNKNPMRDMFCLCKSEFRNLMFNCQLCRDWFHEDCVPPPSATNQNGIVNGGSGPGTNRPKWLCPSCVRSKRPRLETILPLLVQLQQLPIRLPEDEALRCLAERAMNWQDRARKALSSPDVSAAQEAIMAQQQQKRRSEGGAGVGNISSPRKPRRRGSLTKEASGSTESDADDDDDEDECRLRIVEDNFSNDEDEPRTAPATSTVNSDLLKLLSDSEIENLLDLMMEGDLLEVSLDETQELWRILETMPPTLLQAEAMERVVQYMQRQRQQHTNPLPTSGAEDSNDSLMVQNSPNSNSNSGGATGSASNSGRNKKRRSNDTGGNSAVPRKKQSTPKQTPGKKGSAAAARKSDAKASPAASTTPGADADAENKQANGGNTNSSTGSGGGNSATTTPTPGSTHKKRKRTSTTATNNNNNNNNNSTNNSNSSTNLNSNTTSGQGAATGGNNATGGQKKHAQRSQQAAQEDDEEECRAENCHKPTGREVDWVQCDGGCNEWFHMYCVGLNRSQIKPDDDYICIRCTKTVAIGTQGSGHSMSVASTTTPGKQRAVQSAR.

The interval 1–150 is disordered; sequence MSAKTEADNT…SSNKFDQGKN (150 aa). The span at 15–31 shows a compositional bias: gly residues; it reads SGGGGVGSGTSSGGGAS. Residues 45-56 are compositionally biased toward low complexity; the sequence is RNSTGNGTNSGS. Positions 136–145 are enriched in polar residues; that stretch reads HTQPHSSNKF. In terms of domain architecture, JmjN spans 161–202; it reads CPVFRPTTEEFKNPLAYISKIRSIAEKCGIAKILPPATWSPP. Residues 226–316 form the ARID domain; the sequence is TRVKLNFLDQ…ILHPFEVYTS (91 aa). The span at 321–333 shows a compositional bias: low complexity; that stretch reads GPTPTSSGSGSTP. Disordered regions lie at residues 321-380 and 416-437; these read GPTP…GLSG and GSPLATGTTANTRGASQKKGGE. Thr323 carries the post-translational modification Phosphothreonine. 3 stretches are compositionally biased toward polar residues: residues 351–361, 369–380, and 416–430; these read TRQQIAPPNET, FGNSNASCGLSG, and GSPLATGTTANTRGA. The PHD-type 1 zinc finger occupies 448–498; that stretch reads KYICHICNRGDVEESMLLCDGCDDSYHTFCLLPPLTSIPKGEWLCPRCVVE. Residues 591-757 enclose the JmjC domain; sequence EYAESSWNLN…MGRECVNHYS (167 aa). Residues His637, Asp640, and His725 each contribute to the Fe cation site. Positions 960–1049 form a coiled coil; that stretch reads VRTRSDHNQE…LRIELQQLDL (90 aa). A PHD-type 2 zinc finger spans residues 1293 to 1354; sequence DMFCLCKSEF…KWLCPSCVRS (62 aa). The disordered stretch occupies residues 1401–1462; sequence SSPDVSAAQE…SDADDDDDED (62 aa). A compositionally biased stretch (low complexity) spans 1407–1417; that stretch reads AAQEAIMAQQQ. Ser1422 and Ser1433 each carry phosphoserine. Positions 1453–1462 are enriched in acidic residues; the sequence is SDADDDDDED. Phosphoserine is present on Ser1474. The tract at residues 1548-1751 is disordered; it reads YMQRQRQQHT…QRSQQAAQED (204 aa). Low complexity-rich tracts occupy residues 1576-1595, 1624-1650, 1658-1667, 1674-1683, and 1692-1736; these read NSPNSNSNSGGATGSASNSG, GKKGSAAAARKSDAKASPAASTTPGAD, ANGGNTNSST, SATTTPTPGS, and STTA…ATGG. Phosphoserine occurs at positions 1635 and 1640. Residues 1753–1808 form a PHD-type 3 zinc finger; it reads EEECRAENCHKPTGREVDWVQCDGGCNEWFHMYCVGLNRSQIKPDDDYICIRCTKT. The disordered stretch occupies residues 1814–1838; the sequence is QGSGHSMSVASTTTPGKQRAVQSAR.

The protein belongs to the JARID1 histone demethylase family. Interacts with Myc. Part of a complex containing Lid, Myc and Ash2. The cofactor is Fe(2+).

The protein localises to the nucleus. It carries out the reaction N(6),N(6),N(6)-trimethyl-L-lysyl(4)-[histone H3] + 3 2-oxoglutarate + 3 O2 = L-lysyl(4)-[histone H3] + 3 formaldehyde + 3 succinate + 3 CO2. Inhibited by Myc. Histone demethylase that specifically demethylates 'Lys-4' of histone H3, thereby playing a central role in histone code. Does not demethylate histone H3 'Lys-9', H3 'Lys-27', H3 'Lys-36', H3 'Lys-79' or H4 'Lys-20'. Specifically demethylates trimethylated H3 'Lys-4'. Required for the correct regulation of homeotic genes during development. Plays a role in the regulation of the circadian rhythm and in maintaining the normal periodicity of the circadian clock. Regulates the expression of clock-controlled genes including tim, per and cry. In Drosophila melanogaster (Fruit fly), this protein is Lysine-specific demethylase 5.